The sequence spans 122 residues: Sperm-egg fusion protein LLCFC1 (122 aa).

The N-terminal stretch at Met1–Gly28 is a signal peptide. The tract at residues Asn27–Phe51 is disordered. Over residues Thr38–Glu49 the composition is skewed to polar residues.

Its subcellular location is the secreted. Sperm protein required for fusion of sperm with the egg membrane during fertilization. This is Sperm-egg fusion protein LLCFC1 from Homo sapiens (Human).